A 247-amino-acid polypeptide reads, in one-letter code: ATP synthase subunit a, chloroplastic (247 aa).

5 consecutive transmembrane segments (helical) span residues 38–58, 95–115, 134–154, 199–219, and 220–240; these read QVLI…TLAV, VPFI…GALL, INTT…AGLS, LVVV…VMFL, and GLFT…AYIG.

This sequence belongs to the ATPase A chain family. In terms of assembly, F-type ATPases have 2 components, CF(1) - the catalytic core - and CF(0) - the membrane proton channel. CF(1) has five subunits: alpha(3), beta(3), gamma(1), delta(1), epsilon(1). CF(0) has four main subunits: a, b, b' and c.

The protein localises to the plastid. It localises to the chloroplast thylakoid membrane. Its function is as follows. Key component of the proton channel; it plays a direct role in the translocation of protons across the membrane. This is ATP synthase subunit a, chloroplastic from Lemna minor (Common duckweed).